A 194-amino-acid polypeptide reads, in one-letter code: 7-methyl-GTP pyrophosphatase (194 aa).

The active-site Proton acceptor is the D69.

It belongs to the Maf family. YceF subfamily. The cofactor is a divalent metal cation.

The protein localises to the cytoplasm. The enzyme catalyses N(7)-methyl-GTP + H2O = N(7)-methyl-GMP + diphosphate + H(+). Functionally, nucleoside triphosphate pyrophosphatase that hydrolyzes 7-methyl-GTP (m(7)GTP). May have a dual role in cell division arrest and in preventing the incorporation of modified nucleotides into cellular nucleic acids. This is 7-methyl-GTP pyrophosphatase from Sodalis glossinidius (strain morsitans).